The following is a 241-amino-acid chain: 2-C-methyl-D-erythritol 4-phosphate cytidylyltransferase (241 aa).

This sequence belongs to the IspD/TarI cytidylyltransferase family. IspD subfamily.

It catalyses the reaction 2-C-methyl-D-erythritol 4-phosphate + CTP + H(+) = 4-CDP-2-C-methyl-D-erythritol + diphosphate. It functions in the pathway isoprenoid biosynthesis; isopentenyl diphosphate biosynthesis via DXP pathway; isopentenyl diphosphate from 1-deoxy-D-xylulose 5-phosphate: step 2/6. Functionally, catalyzes the formation of 4-diphosphocytidyl-2-C-methyl-D-erythritol from CTP and 2-C-methyl-D-erythritol 4-phosphate (MEP). The sequence is that of 2-C-methyl-D-erythritol 4-phosphate cytidylyltransferase from Shewanella denitrificans (strain OS217 / ATCC BAA-1090 / DSM 15013).